A 91-amino-acid polypeptide reads, in one-letter code: Small ribosomal subunit protein uS15 (91 aa).

This sequence belongs to the universal ribosomal protein uS15 family. Part of the 30S ribosomal subunit. Forms a bridge to the 50S subunit in the 70S ribosome, contacting the 23S rRNA.

One of the primary rRNA binding proteins, it binds directly to 16S rRNA where it helps nucleate assembly of the platform of the 30S subunit by binding and bridging several RNA helices of the 16S rRNA. Functionally, forms an intersubunit bridge (bridge B4) with the 23S rRNA of the 50S subunit in the ribosome. The polypeptide is Small ribosomal subunit protein uS15 (Rickettsia peacockii (strain Rustic)).